Here is a 309-residue protein sequence, read N- to C-terminus: Methionyl-tRNA formyltransferase (309 aa).

Residue 110–113 coordinates (6S)-5,6,7,8-tetrahydrofolate; sequence SLLP.

This sequence belongs to the Fmt family.

The enzyme catalyses L-methionyl-tRNA(fMet) + (6R)-10-formyltetrahydrofolate = N-formyl-L-methionyl-tRNA(fMet) + (6S)-5,6,7,8-tetrahydrofolate + H(+). Attaches a formyl group to the free amino group of methionyl-tRNA(fMet). The formyl group appears to play a dual role in the initiator identity of N-formylmethionyl-tRNA by promoting its recognition by IF2 and preventing the misappropriation of this tRNA by the elongation apparatus. The sequence is that of Methionyl-tRNA formyltransferase from Caldanaerobacter subterraneus subsp. tengcongensis (strain DSM 15242 / JCM 11007 / NBRC 100824 / MB4) (Thermoanaerobacter tengcongensis).